The chain runs to 792 residues: Oxidoreductase cns1 (792 aa).

Interacts with cns2.

It is found in the lipid droplet. The protein operates within secondary metabolite biosynthesis. Its function is as follows. Oxidoreductase; part of the gene cluster that mediates the biosynthesis of cordycepin (COR) and pentostatin (PTN), two adenosine analogs with related bioactivity profiles as both mimic adenosine and can inhibit some of the processes that are adenosine dependent. Within the pathway, cns1 catalyzes the last step by converting the cns2 product 2'-carbonyl-3'-deoxyadenosine (2'-C-3'-dA) into cordycepin (3'-deoxyadenosine). The first step of cordycepin biosynthesis involves hydroxyl phosphorylation of the 3'-OH position on adenosine to produce adenosine-3'-monophosphate (3'-AMP), catalyzed by kinase activity of cns3. Next, 3'-AMP is dephosphorylated to 2'-carbonyl-3'-deoxyadenosine by cns2, which is finally converted to cordycepin by the oxidoreductase cns1. Pentostatin production is mediated by the ATP phosphoribosyltransferase activity of cns3 on adenosine to inhibit the activity of adenosine deaminase (ADA) to prevent COR deamination to 3'-deoxyinosine (3'-dI). This chain is Oxidoreductase cns1, found in Cordyceps militaris (strain CM01) (Caterpillar fungus).